A 272-amino-acid chain; its full sequence is uncharacterized protein (272 aa).

Transmembrane regions (helical) follow at residues 9–29, 38–58, 154–174, and 188–208; these read PVGF…GSGV, LTSF…SFPP, AGEF…VLML, and AIAL…FNPI. Residues 209 to 272 are Cytoplasmic-facing; sequence AAKLEEKTES…KTKKGSVHEA (64 aa).

This sequence belongs to the MotA family.

It is found in the cell membrane. May be involved in some transport function. This is an uncharacterized protein from Bacillus subtilis (strain 168).